The primary structure comprises 946 residues: Phosphatidylinositol 4,5-bisphosphate 5-phosphatase INP51 (946 aa).

The 330-residue stretch at 151 to 480 folds into the SAC domain; the sequence is LKKLFSDGTF…YYWLDRTYTK (330 aa). Disordered regions lie at residues 872–902 and 927–946; these read SDSI…SDLK and PKRD…FIER. The span at 936-946 shows a compositional bias: acidic residues; the sequence is ENEDEPLFIER.

Belongs to the synaptojanin family. The protein in the central section; belongs to the inositol 1,4,5-trisphosphate 5-phosphatase family. Interacts with IRS4 and TAX4.

It localises to the cytoplasm. The protein localises to the cytoskeleton. It is found in the actin patch. The catalysed reaction is a 1,2-diacyl-sn-glycero-3-phospho-(1D-myo-inositol-4,5-bisphosphate) + H2O = a 1,2-diacyl-sn-glycero-3-phospho-(1D-myo-inositol 4-phosphate) + phosphate. IRS4 and TAX4 are both positive regulator of INP51 activity and phosphatidylinositol 4,5-bisphosphate turnover. Controls the cellular levels and subcellular distribution of phosphatidylinositol 4,5-bisphosphate (PtdIns(4,5)P2). Does not utilize phosphatidylinositol 3,5-bisphosphate (PtdIns(3,5)P2), nor phosphatidylinositol 3-phosphate (PtdIns(3)P) and phosphatidylinositol 4-phosphate (PtdIns(4)P). Plays an essential role in a TGN (trans Golgi network)-to-early endosome pathway. Involved in endocytosis and acts as a negative regulator of the Slm pathway which modulates polarized actin assembly and growth. This is Phosphatidylinositol 4,5-bisphosphate 5-phosphatase INP51 (INP51) from Saccharomyces cerevisiae (strain ATCC 204508 / S288c) (Baker's yeast).